The sequence spans 282 residues: BTB/POZ domain-containing protein At3g56230 (282 aa).

Over residues 40-50 the composition is skewed to basic and acidic residues; it reads GSKEDRHDKSN. Residues 40–66 are disordered; the sequence is GSKEDRHDKSNHNSTINNGSSISSSPL. A compositionally biased stretch (low complexity) spans 51 to 64; that stretch reads HNSTINNGSSISSS. Positions 111 to 181 constitute a BTB domain; it reads ADILLKPGDD…LYTGTLASDK (71 aa).

It participates in protein modification; protein ubiquitination. Its function is as follows. May act as a substrate-specific adapter of an E3 ubiquitin-protein ligase complex (CUL3-RBX1-BTB) which mediates the ubiquitination and subsequent proteasomal degradation of target proteins. The protein is BTB/POZ domain-containing protein At3g56230 of Arabidopsis thaliana (Mouse-ear cress).